Here is a 276-residue protein sequence, read N- to C-terminus: SF-assemblin (276 aa).

The nonhelical region stretch occupies residues 1 to 31 (MSLRPFETPGGLSSLSPRRRDFSPTRPGTNG). The disordered stretch occupies residues 1–37 (MSLRPFETPGGLSSLSPRRRDFSPTRPGTNGPSAKLE). A rod region spans residues 32-276 (PSAKLEHVTE…LQEGLKLVSA (245 aa)). Residues 67 to 145 (LLQESLQRIE…LVRDERESRR (79 aa)) are a coiled coil.

Belongs to the SF-assemblin family.

It localises to the cytoplasm. Its subcellular location is the cytoskeleton. Major component of the striated microtubule-associated fibers (SMAFs; system-I-fibers). The sequence is that of SF-assemblin from Chlamydomonas reinhardtii (Chlamydomonas smithii).